Consider the following 455-residue polypeptide: Bifunctional protein GlmU (455 aa).

Residues 1 to 226 (MSLEIVILAA…AMEVQGANDR (226 aa)) form a pyrophosphorylase region. UDP-N-acetyl-alpha-D-glucosamine-binding positions include 8 to 11 (LAAG), Lys-22, Gln-73, 78 to 79 (GT), 99 to 101 (YGD), Gly-136, Glu-151, Asn-166, and Asn-224. Asp-101 serves as a coordination point for Mg(2+). Asn-224 lines the Mg(2+) pocket. Residues 227-247 (KQLAELERHYQLRAGRRLMAQ) form a linker region. The interval 248–455 (GVTLRDPARF…WKRPEKIKKD (208 aa)) is N-acetyltransferase. UDP-N-acetyl-alpha-D-glucosamine-binding residues include Arg-330 and Lys-348. Residue His-360 is the Proton acceptor of the active site. Residues Tyr-363 and Asn-374 each contribute to the UDP-N-acetyl-alpha-D-glucosamine site. Acetyl-CoA is bound by residues Ala-377, 383–384 (NY), Ser-402, Ala-420, and Arg-437.

The protein in the N-terminal section; belongs to the N-acetylglucosamine-1-phosphate uridyltransferase family. This sequence in the C-terminal section; belongs to the transferase hexapeptide repeat family. As to quaternary structure, homotrimer. It depends on Mg(2+) as a cofactor.

It localises to the cytoplasm. It catalyses the reaction alpha-D-glucosamine 1-phosphate + acetyl-CoA = N-acetyl-alpha-D-glucosamine 1-phosphate + CoA + H(+). The enzyme catalyses N-acetyl-alpha-D-glucosamine 1-phosphate + UTP + H(+) = UDP-N-acetyl-alpha-D-glucosamine + diphosphate. The protein operates within nucleotide-sugar biosynthesis; UDP-N-acetyl-alpha-D-glucosamine biosynthesis; N-acetyl-alpha-D-glucosamine 1-phosphate from alpha-D-glucosamine 6-phosphate (route II): step 2/2. It functions in the pathway nucleotide-sugar biosynthesis; UDP-N-acetyl-alpha-D-glucosamine biosynthesis; UDP-N-acetyl-alpha-D-glucosamine from N-acetyl-alpha-D-glucosamine 1-phosphate: step 1/1. It participates in bacterial outer membrane biogenesis; LPS lipid A biosynthesis. Its function is as follows. Catalyzes the last two sequential reactions in the de novo biosynthetic pathway for UDP-N-acetylglucosamine (UDP-GlcNAc). The C-terminal domain catalyzes the transfer of acetyl group from acetyl coenzyme A to glucosamine-1-phosphate (GlcN-1-P) to produce N-acetylglucosamine-1-phosphate (GlcNAc-1-P), which is converted into UDP-GlcNAc by the transfer of uridine 5-monophosphate (from uridine 5-triphosphate), a reaction catalyzed by the N-terminal domain. The protein is Bifunctional protein GlmU of Pseudomonas fluorescens (strain ATCC BAA-477 / NRRL B-23932 / Pf-5).